We begin with the raw amino-acid sequence, 188 residues long: Transmembrane protein 160 (188 aa).

The transit peptide at 1–96 (MGGGWWWARA…ISFMQSDMGR (96 aa)) directs the protein to the mitochondrion. Residues 25 to 52 (PPRPRSGGARGSFAPGHGPRAGASPPPV) form a disordered region. Over residues 29 to 38 (RSGGARGSFA) the composition is skewed to low complexity. Ser48 is modified (phosphoserine). 2 helical membrane passes run 102–122 (FFLL…VGLA) and 135–155 (AAAG…AVGL).

It belongs to the TMEM160 family.

Its subcellular location is the mitochondrion inner membrane. This is Transmembrane protein 160 from Bos taurus (Bovine).